Reading from the N-terminus, the 486-residue chain is CDT1-like protein b (486 aa).

Disordered regions lie at residues 273 to 294 (PEGG…PSRS) and 348 to 371 (VKDD…ASDD). Positions 281–294 (LRSTNSLARGPSRS) are enriched in polar residues. Residues 348–363 (VKDDISNESGDEKSNY) are compositionally biased toward basic and acidic residues.

This sequence belongs to the Cdt1 family. In terms of tissue distribution, expressed in proliferating (e.g. shoot and root apical meristems, organ primordia, guard cells and stomatal lineage) and endoreplicating cells (e.g. developing trichomes).

It localises to the nucleus. In terms of biological role, member of the pre-replication complex. Regulates endoreduplication. Involved in the coordination of cell and plastid division. The polypeptide is CDT1-like protein b (CDT1B) (Arabidopsis thaliana (Mouse-ear cress)).